The following is a 304-amino-acid chain: Homoserine O-succinyltransferase (304 aa).

Cys-142 functions as the Acyl-thioester intermediate in the catalytic mechanism. Positions 163 and 192 each coordinate substrate. Catalysis depends on His-235, which acts as the Proton acceptor. Glu-237 is an active-site residue. Position 249 (Arg-249) interacts with substrate.

It belongs to the MetA family.

It is found in the cytoplasm. It catalyses the reaction L-homoserine + succinyl-CoA = O-succinyl-L-homoserine + CoA. Its pathway is amino-acid biosynthesis; L-methionine biosynthesis via de novo pathway; O-succinyl-L-homoserine from L-homoserine: step 1/1. Transfers a succinyl group from succinyl-CoA to L-homoserine, forming succinyl-L-homoserine. The polypeptide is Homoserine O-succinyltransferase (Blochmanniella pennsylvanica (strain BPEN)).